The sequence spans 338 residues: UPF0252 protein PF1496 (338 aa).

The chain crosses the membrane as a helical span at residues 100–120; the sequence is ILSMLFLVFILFPAFTSHIWS.

This sequence belongs to the UPF0252 family.

Its subcellular location is the membrane. In Pyrococcus furiosus (strain ATCC 43587 / DSM 3638 / JCM 8422 / Vc1), this protein is UPF0252 protein PF1496.